The sequence spans 168 residues: Phosphopantetheine adenylyltransferase (168 aa).

Ser-8 contributes to the substrate binding site. Residues 8-9 (SF) and His-16 contribute to the ATP site. Residues Lys-40, Thr-72, and Arg-86 each contribute to the substrate site. Residues 87-89 (GLR), Glu-97, and 122-128 (YSFLSSS) each bind ATP.

Belongs to the bacterial CoaD family. In terms of assembly, homohexamer. The cofactor is Mg(2+).

It localises to the cytoplasm. It catalyses the reaction (R)-4'-phosphopantetheine + ATP + H(+) = 3'-dephospho-CoA + diphosphate. The protein operates within cofactor biosynthesis; coenzyme A biosynthesis; CoA from (R)-pantothenate: step 4/5. In terms of biological role, reversibly transfers an adenylyl group from ATP to 4'-phosphopantetheine, yielding dephospho-CoA (dPCoA) and pyrophosphate. The polypeptide is Phosphopantetheine adenylyltransferase (Thermosynechococcus vestitus (strain NIES-2133 / IAM M-273 / BP-1)).